A 950-amino-acid polypeptide reads, in one-letter code: Glycine dehydrogenase (decarboxylating) 1 (950 aa).

Lysine 704 is subject to N6-(pyridoxal phosphate)lysine.

Belongs to the GcvP family. In terms of assembly, the glycine cleavage system is composed of four proteins: P, T, L and H. The cofactor is pyridoxal 5'-phosphate.

The catalysed reaction is N(6)-[(R)-lipoyl]-L-lysyl-[glycine-cleavage complex H protein] + glycine + H(+) = N(6)-[(R)-S(8)-aminomethyldihydrolipoyl]-L-lysyl-[glycine-cleavage complex H protein] + CO2. In terms of biological role, the glycine cleavage system catalyzes the degradation of glycine. The P protein binds the alpha-amino group of glycine through its pyridoxal phosphate cofactor; CO(2) is released and the remaining methylamine moiety is then transferred to the lipoamide cofactor of the H protein. This is Glycine dehydrogenase (decarboxylating) 1 from Pseudomonas fluorescens (strain Pf0-1).